The primary structure comprises 227 residues: Protein GrpE (227 aa).

Residues 1–18 (MTQGNQKTEGNPPEQVTV) show a composition bias toward polar residues. 2 disordered regions span residues 1 to 57 (MTQG…GAAT) and 193 to 227 (TEEGDGEAAATDEPTAAAAETRPPESDDNAGASGD). The span at 19–35 (TDKRRIDPETGEVRHVP) shows a compositional bias: basic and acidic residues. Composition is skewed to low complexity over residues 41-50 (GGTAPQAATA) and 199-213 (EAAATDEPTAAAAET).

Belongs to the GrpE family. Homodimer.

It is found in the cytoplasm. In terms of biological role, participates actively in the response to hyperosmotic and heat shock by preventing the aggregation of stress-denatured proteins, in association with DnaK and GrpE. It is the nucleotide exchange factor for DnaK and may function as a thermosensor. Unfolded proteins bind initially to DnaJ; upon interaction with the DnaJ-bound protein, DnaK hydrolyzes its bound ATP, resulting in the formation of a stable complex. GrpE releases ADP from DnaK; ATP binding to DnaK triggers the release of the substrate protein, thus completing the reaction cycle. Several rounds of ATP-dependent interactions between DnaJ, DnaK and GrpE are required for fully efficient folding. The polypeptide is Protein GrpE (Mycolicibacterium paratuberculosis (strain ATCC BAA-968 / K-10) (Mycobacterium paratuberculosis)).